Here is a 417-residue protein sequence, read N- to C-terminus: MASVQSGKMIVGLDIGTSKVVALVGEVTADGQLEVVGIGTHPSRGLKKGVVVNIESTVQSIQRAIDEAQQMAGCRIHSAFVGIAGNHIRSLNSHGIVAIRDREVNPADIERVLDAAQAVAIPADQRVLHTLAQDYVIDNQEGVREPLGMSGVRLEAKVHVVTCAVNASQNIEKCVRRCGLEVDDIILEQLASAYSVLTEDEKELGVCLVDIGGGTTDIAIFTEGAIRHTAVIPIAGDQVTNDIAMALRTPTQYAEEIKIRYACALAKLAGAGETIKVPSVGDRPPRELSRQALAEVVEPRYDELFTLVQAELRRSGYEDLIPAGIVLTGGTSKMEGAVELAEEIFHMPVRLGVPYSVKGLTDVVRNPIYSTGVGLLMYGLQKQSDGMSMSVSGSSYSSDEPKAPVLERLKRWVQGNF.

It belongs to the FtsA/MreB family. In terms of assembly, self-interacts. Interacts with FtsZ.

The protein resides in the cell inner membrane. Cell division protein that is involved in the assembly of the Z ring. May serve as a membrane anchor for the Z ring. The chain is Cell division protein FtsA from Pseudomonas aeruginosa (strain ATCC 15692 / DSM 22644 / CIP 104116 / JCM 14847 / LMG 12228 / 1C / PRS 101 / PAO1).